Reading from the N-terminus, the 176-residue chain is Endoribonuclease YbeY (176 aa).

Zn(2+) contacts are provided by H138, H142, and H148.

This sequence belongs to the endoribonuclease YbeY family. It depends on Zn(2+) as a cofactor.

The protein localises to the cytoplasm. Its function is as follows. Single strand-specific metallo-endoribonuclease involved in late-stage 70S ribosome quality control and in maturation of the 3' terminus of the 16S rRNA. The sequence is that of Endoribonuclease YbeY from Trichormus variabilis (strain ATCC 29413 / PCC 7937) (Anabaena variabilis).